The primary structure comprises 142 residues: Putative pre-16S rRNA nuclease (142 aa).

This sequence belongs to the YqgF nuclease family.

It is found in the cytoplasm. Functionally, could be a nuclease involved in processing of the 5'-end of pre-16S rRNA. The polypeptide is Putative pre-16S rRNA nuclease (Chlorobaculum tepidum (strain ATCC 49652 / DSM 12025 / NBRC 103806 / TLS) (Chlorobium tepidum)).